We begin with the raw amino-acid sequence, 482 residues long: Coagulation factor X (482 aa).

A signal peptide spans 1–20 (MESPVRLSLLYVVLASLLLP). Residues 21–40 (GRSVFINRERANNVLQRIRR) constitute a propeptide that is removed on maturation. The region spanning 41-85 (ANSFFEEIKKGNLERECVEEICSFEEAREVFEDNEKTTEFWNKYE) is the Gla domain. 4-carboxyglutamate occurs at positions 46, 47, 54, 56, 59, 60, 65, 66, 69, 72, 75, and 79. Cys-57 and Cys-62 are disulfide-bonded. One can recognise an EGF-like 1; calcium-binding domain in the interval 86–122 (DGDQCESSPCQNQGECRDGLGSYTCTCTEGFEGKNCE). Cystine bridges form between Cys-90–Cys-101, Cys-95–Cys-110, Cys-112–Cys-121, Cys-129–Cys-140, Cys-136–Cys-149, Cys-151–Cys-164, Cys-172–Cys-340, Cys-238–Cys-243, Cys-259–Cys-275, Cys-388–Cys-402, and Cys-413–Cys-441. The residue at position 103 (Asp-103) is a (3R)-3-hydroxyaspartate. In terms of domain architecture, EGF-like 2 spans 125-165 (VRKLCSLDNGDCDQFCREEQNSVVCSCAKGYFLGNDGKSCL). A propeptide spans 184–231 (VALNTSNSEPDPEDLMPDADILYPTESPSELLNLNKTEPEANSDDVIR) (activation peptide). N-linked (GlcNAc...) asparagine glycans are attached at residues Asn-187 and Asn-218. One can recognise a Peptidase S1 domain in the interval 232–465 (IVGGQECKRG…FLKWIDRSMK (234 aa)). Residues His-274 and Asp-320 each act as charge relay system in the active site. Ser-417 (charge relay system) is an active-site residue.

This sequence belongs to the peptidase S1 family. In terms of assembly, the two chains are formed from a single-chain precursor by the excision of two Arg residues and are held together by 1 or more disulfide bonds. Forms a heterodimer with SERPINA5. Interacts with ixolaris, an anticoagulant protein from Ixodes scapularis saliva. In terms of processing, the vitamin K-dependent, enzymatic carboxylation of some glutamate residues allows the modified protein to bind calcium. N- and O-glycosylated. Post-translationally, proteolytically cleaved and activated by cathepsin CTSG. The activation peptide is cleaved by factor IXa (in the intrinsic pathway), or by factor VIIa (in the extrinsic pathway). In terms of processing, the iron and 2-oxoglutarate dependent 3-hydroxylation of aspartate and asparagine is (R) stereospecific within EGF domains. Plasma; synthesized in the liver.

The protein localises to the secreted. It carries out the reaction Selective cleavage of Arg-|-Thr and then Arg-|-Ile bonds in prothrombin to form thrombin.. Its activity is regulated as follows. Inhibited by SERPINA5. Functionally, factor Xa is a vitamin K-dependent glycoprotein that converts prothrombin to thrombin in the presence of factor Va, calcium and phospholipid during blood clotting. Factor Xa activates pro-inflammatory signaling pathways in a protease-activated receptor (PAR)-dependent manner. This chain is Coagulation factor X (F10), found in Rattus norvegicus (Rat).